A 75-amino-acid polypeptide reads, in one-letter code: Large ribosomal subunit protein bL31 (75 aa).

This sequence belongs to the bacterial ribosomal protein bL31 family. Type A subfamily. In terms of assembly, part of the 50S ribosomal subunit.

Functionally, binds the 23S rRNA. The polypeptide is Large ribosomal subunit protein bL31 (Sphingopyxis alaskensis (strain DSM 13593 / LMG 18877 / RB2256) (Sphingomonas alaskensis)).